We begin with the raw amino-acid sequence, 317 residues long: 4-hydroxy-3-methylbut-2-enyl diphosphate reductase (317 aa).

Residue Cys-12 coordinates [4Fe-4S] cluster. The (2E)-4-hydroxy-3-methylbut-2-enyl diphosphate site is built by His-41 and His-74. Dimethylallyl diphosphate is bound by residues His-41 and His-74. Isopentenyl diphosphate-binding residues include His-41 and His-74. Cys-96 provides a ligand contact to [4Fe-4S] cluster. His-124 lines the (2E)-4-hydroxy-3-methylbut-2-enyl diphosphate pocket. His-124 serves as a coordination point for dimethylallyl diphosphate. An isopentenyl diphosphate-binding site is contributed by His-124. The active-site Proton donor is the Glu-126. Thr-169 provides a ligand contact to (2E)-4-hydroxy-3-methylbut-2-enyl diphosphate. Cys-199 contributes to the [4Fe-4S] cluster binding site. 4 residues coordinate (2E)-4-hydroxy-3-methylbut-2-enyl diphosphate: Ser-227, Ser-228, Asn-229, and Ser-271. 4 residues coordinate dimethylallyl diphosphate: Ser-227, Ser-228, Asn-229, and Ser-271. Ser-227, Ser-228, Asn-229, and Ser-271 together coordinate isopentenyl diphosphate.

This sequence belongs to the IspH family. Requires [4Fe-4S] cluster as cofactor.

The catalysed reaction is isopentenyl diphosphate + 2 oxidized [2Fe-2S]-[ferredoxin] + H2O = (2E)-4-hydroxy-3-methylbut-2-enyl diphosphate + 2 reduced [2Fe-2S]-[ferredoxin] + 2 H(+). It catalyses the reaction dimethylallyl diphosphate + 2 oxidized [2Fe-2S]-[ferredoxin] + H2O = (2E)-4-hydroxy-3-methylbut-2-enyl diphosphate + 2 reduced [2Fe-2S]-[ferredoxin] + 2 H(+). It functions in the pathway isoprenoid biosynthesis; dimethylallyl diphosphate biosynthesis; dimethylallyl diphosphate from (2E)-4-hydroxy-3-methylbutenyl diphosphate: step 1/1. The protein operates within isoprenoid biosynthesis; isopentenyl diphosphate biosynthesis via DXP pathway; isopentenyl diphosphate from 1-deoxy-D-xylulose 5-phosphate: step 6/6. In terms of biological role, catalyzes the conversion of 1-hydroxy-2-methyl-2-(E)-butenyl 4-diphosphate (HMBPP) into a mixture of isopentenyl diphosphate (IPP) and dimethylallyl diphosphate (DMAPP). Acts in the terminal step of the DOXP/MEP pathway for isoprenoid precursor biosynthesis. The polypeptide is 4-hydroxy-3-methylbut-2-enyl diphosphate reductase (Vibrio parahaemolyticus serotype O3:K6 (strain RIMD 2210633)).